The primary structure comprises 215 residues: Probable phosphoglycerate mutase GpmB (215 aa).

Substrate is bound by residues 8–15, 21–22, R58, R60, 82–85, 104–105, and 151–152; these read RHGETQWN, QG, ELNM, RR, and GI. The active-site Tele-phosphohistidine intermediate is H9. The active-site Proton donor/acceptor is the E82.

This sequence belongs to the phosphoglycerate mutase family. GpmB subfamily.

It carries out the reaction (2R)-2-phosphoglycerate = (2R)-3-phosphoglycerate. It functions in the pathway carbohydrate degradation; glycolysis; pyruvate from D-glyceraldehyde 3-phosphate: step 3/5. The polypeptide is Probable phosphoglycerate mutase GpmB (Escherichia fergusonii (strain ATCC 35469 / DSM 13698 / CCUG 18766 / IAM 14443 / JCM 21226 / LMG 7866 / NBRC 102419 / NCTC 12128 / CDC 0568-73)).